The primary structure comprises 252 residues: Imidazole glycerol phosphate synthase subunit HisF (252 aa).

Catalysis depends on residues D11 and D130.

It belongs to the HisA/HisF family. In terms of assembly, heterodimer of HisH and HisF.

The protein localises to the cytoplasm. The enzyme catalyses 5-[(5-phospho-1-deoxy-D-ribulos-1-ylimino)methylamino]-1-(5-phospho-beta-D-ribosyl)imidazole-4-carboxamide + L-glutamine = D-erythro-1-(imidazol-4-yl)glycerol 3-phosphate + 5-amino-1-(5-phospho-beta-D-ribosyl)imidazole-4-carboxamide + L-glutamate + H(+). It functions in the pathway amino-acid biosynthesis; L-histidine biosynthesis; L-histidine from 5-phospho-alpha-D-ribose 1-diphosphate: step 5/9. Functionally, IGPS catalyzes the conversion of PRFAR and glutamine to IGP, AICAR and glutamate. The HisF subunit catalyzes the cyclization activity that produces IGP and AICAR from PRFAR using the ammonia provided by the HisH subunit. This is Imidazole glycerol phosphate synthase subunit HisF from Thermococcus onnurineus (strain NA1).